Reading from the N-terminus, the 466-residue chain is MNSEGGKPGNVLTVNGNYTGNNGLMTFNATLGGDNSPTDKMNVKGDTQGNTRVRVDNIGGVGAQTVNGIELIEVGGNSAGNFALTTGTVEAGAYVYTLAKGKGNDEKNWYLTSKWDGVTPADTPDPINNPPVVDPEGPSVYRPEAGSYISNIAAANSLFSHRLHDRLGEPQYTDSLHSQGSASSMWMRHVGGHERSRAGDGQLNTQANRYVLQLGGDLAQWSSNAQDRWHLGVMAGYANQHSNTQSNRVGYKSDGRISGYSAGLYATWYQNDANKTGAYVDSWALYNWFDNSVSSDNRSADDYDSRGVTASVEGGYTFEAGTFSGSEGTLNTWYVQPQAQITWMGVKDSDHTRKDGTRIETEGDGNVQTRLGVKTYLNSHHQRDDGKQREFQPYIEANWINNSKVYAVKMNGQTVGREGARNLGEVRTGVEAKVNNNLSLWGNVGVQLGDKGYSDTQGMLGVKYSW.

Positions 178–466 constitute an Autotransporter domain; the sequence is SQGSASSMWM…QGMLGVKYSW (289 aa).

This is an uncharacterized protein from Escherichia coli (strain K12).